Consider the following 240-residue polypeptide: ATP-dependent Clp protease proteolytic subunit 2 (240 aa).

Residue Ser-132 is the Nucleophile of the active site. Residue His-157 is part of the active site.

This sequence belongs to the peptidase S14 family. Fourteen ClpP subunits assemble into 2 heptameric rings which stack back to back to give a disk-like structure with a central cavity, resembling the structure of eukaryotic proteasomes.

The protein localises to the cytoplasm. It carries out the reaction Hydrolysis of proteins to small peptides in the presence of ATP and magnesium. alpha-casein is the usual test substrate. In the absence of ATP, only oligopeptides shorter than five residues are hydrolyzed (such as succinyl-Leu-Tyr-|-NHMec, and Leu-Tyr-Leu-|-Tyr-Trp, in which cleavage of the -Tyr-|-Leu- and -Tyr-|-Trp bonds also occurs).. In terms of biological role, cleaves peptides in various proteins in a process that requires ATP hydrolysis. Has a chymotrypsin-like activity. Plays a major role in the degradation of misfolded proteins. This chain is ATP-dependent Clp protease proteolytic subunit 2, found in Synechococcus elongatus (strain ATCC 33912 / PCC 7942 / FACHB-805) (Anacystis nidulans R2).